The chain runs to 190 residues: Probable RNA-binding protein 18 (190 aa).

Positions His25–Ala106 constitute an RRM domain. The interval Val166–Arg190 is disordered.

The protein is Probable RNA-binding protein 18 (RBM18) of Bos taurus (Bovine).